The chain runs to 178 residues: NADPH azoreductase (178 aa).

106 to 111 contacts NADP(+); that stretch reads GGGKGG.

The protein belongs to the azoreductase type 2 family. As to quaternary structure, monomer.

The enzyme catalyses N,N-dimethyl-1,4-phenylenediamine + aniline + 2 NADP(+) = 4-(dimethylamino)azobenzene + 2 NADPH + 2 H(+). In terms of biological role, catalyzes the reductive cleavage of azo bond in aromatic azo compounds to the corresponding amines. Requires NADPH as an electron donor for its activity. Compounds with paired naphthalene groups coupled with the azo group are good substrates, with the following preference order: Rocceline &gt; Sumifix Black B &gt; Solar Orange. This chain is NADPH azoreductase (azr), found in Bacillus sp. (strain OY1-2).